The chain runs to 226 residues: 7-cyano-7-deazaguanine synthase (226 aa).

9-19 (LSGGLDSTVAT) is a binding site for ATP. The Zn(2+) site is built by Cys192, Cys200, Cys203, and Cys206.

It belongs to the QueC family. Requires Zn(2+) as cofactor.

The catalysed reaction is 7-carboxy-7-deazaguanine + NH4(+) + ATP = 7-cyano-7-deazaguanine + ADP + phosphate + H2O + H(+). Its pathway is purine metabolism; 7-cyano-7-deazaguanine biosynthesis. Its function is as follows. Catalyzes the ATP-dependent conversion of 7-carboxy-7-deazaguanine (CDG) to 7-cyano-7-deazaguanine (preQ(0)). This Methanosphaera stadtmanae (strain ATCC 43021 / DSM 3091 / JCM 11832 / MCB-3) protein is 7-cyano-7-deazaguanine synthase.